The chain runs to 343 residues: Heat-inducible transcription repressor HrcA (343 aa).

The protein belongs to the HrcA family.

Negative regulator of class I heat shock genes (grpE-dnaK-dnaJ and groELS operons). Prevents heat-shock induction of these operons. In Mycobacterium ulcerans (strain Agy99), this protein is Heat-inducible transcription repressor HrcA.